A 332-amino-acid chain; its full sequence is Methylthioribose-1-phosphate isomerase (332 aa).

Residues 44-46, arginine 87, and glutamine 192 each bind substrate; that span reads RGA. The active-site Proton donor is aspartate 233. 243 to 244 contacts substrate; the sequence is NK.

It belongs to the eIF-2B alpha/beta/delta subunits family. MtnA subfamily.

It catalyses the reaction 5-(methylsulfanyl)-alpha-D-ribose 1-phosphate = 5-(methylsulfanyl)-D-ribulose 1-phosphate. Its pathway is amino-acid biosynthesis; L-methionine biosynthesis via salvage pathway; L-methionine from S-methyl-5-thio-alpha-D-ribose 1-phosphate: step 1/6. Catalyzes the interconversion of methylthioribose-1-phosphate (MTR-1-P) into methylthioribulose-1-phosphate (MTRu-1-P). This is Methylthioribose-1-phosphate isomerase from Dehalococcoides mccartyi (strain CBDB1).